A 365-amino-acid chain; its full sequence is Class I histocompatibility antigen, Gogo-C*0101/C*0102 alpha chain (365 aa).

An N-terminal signal peptide occupies residues M1–A24. An alpha-1 region spans residues G25–D114. Residues G25–I308 lie on the Extracellular side of the membrane. A glycan (N-linked (GlcNAc...) asparagine) is linked at N110. The tract at residues G115–A206 is alpha-2. Cystine bridges form between C125–C188 and C227–C283. The tract at residues D207 to W298 is alpha-3. Positions P209–R297 constitute an Ig-like C1-type domain. A connecting peptide region spans residues E299–I308. A helical membrane pass occupies residues V309–C332. Over R333–A365 the chain is Cytoplasmic. Phosphoserine occurs at positions 356 and 359.

It belongs to the MHC class I family. Heterodimer of an alpha chain and a beta chain (beta-2-microglobulin).

It is found in the membrane. Its function is as follows. Involved in the presentation of foreign antigens to the immune system. The protein is Class I histocompatibility antigen, Gogo-C*0101/C*0102 alpha chain of Gorilla gorilla gorilla (Western lowland gorilla).